The sequence spans 206 residues: Probable N-acetyltransferase 14 (206 aa).

The N-acetyltransferase domain maps to 6-206 (LSVREMREDE…MLVREFSKDL (201 aa)). A helical transmembrane segment spans residues 57 to 77 (FILASFALALLLPVFLAVAAV).

This sequence belongs to the camello family.

It is found in the membrane. In terms of biological role, probable acetyltransferase that binds the 5'-GGACTACAG-3' sequence of coproporphyrinogen oxidase promoter. Able to activate transcription of a reporter construct in vitro. Functionally, probable acetyltransferase. Its function is as follows. May act as a transcription factor regulating the expression of coproporphyrinogen oxidase by binding to a promoter regulatory element. The sequence is that of Probable N-acetyltransferase 14 (Nat14) from Mus musculus (Mouse).